A 291-amino-acid polypeptide reads, in one-letter code: 4-hydroxy-tetrahydrodipicolinate synthase (291 aa).

Threonine 44 contacts pyruvate. Tyrosine 132 functions as the Proton donor/acceptor in the catalytic mechanism. Lysine 160 functions as the Schiff-base intermediate with substrate in the catalytic mechanism. Isoleucine 202 serves as a coordination point for pyruvate.

This sequence belongs to the DapA family. In terms of assembly, homotetramer; dimer of dimers.

It is found in the cytoplasm. The catalysed reaction is L-aspartate 4-semialdehyde + pyruvate = (2S,4S)-4-hydroxy-2,3,4,5-tetrahydrodipicolinate + H2O + H(+). It participates in amino-acid biosynthesis; L-lysine biosynthesis via DAP pathway; (S)-tetrahydrodipicolinate from L-aspartate: step 3/4. In terms of biological role, catalyzes the condensation of (S)-aspartate-beta-semialdehyde [(S)-ASA] and pyruvate to 4-hydroxy-tetrahydrodipicolinate (HTPA). This Sphingopyxis alaskensis (strain DSM 13593 / LMG 18877 / RB2256) (Sphingomonas alaskensis) protein is 4-hydroxy-tetrahydrodipicolinate synthase.